Reading from the N-terminus, the 555-residue chain is Potassium-transporting ATPase potassium-binding subunit (555 aa).

10 helical membrane-spanning segments follow: residues 2 to 22, 60 to 80, 130 to 150, 173 to 193, 246 to 266, 278 to 298, 374 to 394, 412 to 432, 483 to 503, and 525 to 545; these read IWVAVVITMLLFILVAKPTGI, QYALSLVLLNGFMIVVVYFIF, IGITFLMFAAPATTLALVMAF, VFLPIAFIAALVFVALGVPQT, MSNILQMMLMMLLPTALPFTY, ILFVSLFMVFLLGFITITTSE, AGFVNIIMYAIIAVFISGLMV, LIAVTILFHPLLILGFSALAL, LVMFLGRYFSLITMLAVAASL, and GIFIGTIVIVGALTFFPMLVL.

The protein belongs to the KdpA family. The system is composed of three essential subunits: KdpA, KdpB and KdpC.

Its subcellular location is the cell membrane. Part of the high-affinity ATP-driven potassium transport (or Kdp) system, which catalyzes the hydrolysis of ATP coupled with the electrogenic transport of potassium into the cytoplasm. This subunit binds the extracellular potassium ions and delivers the ions to the membrane domain of KdpB through an intramembrane tunnel. This chain is Potassium-transporting ATPase potassium-binding subunit, found in Bacillus cereus (strain 03BB102).